The following is a 626-amino-acid chain: DNA-directed RNA polymerase subunit gamma (626 aa).

4 residues coordinate Zn(2+): Cys71, Cys73, Cys86, and Cys89. 3 residues coordinate Mg(2+): Asp467, Asp469, and Asp471.

Belongs to the RNA polymerase beta' chain family. RpoC1 subfamily. In cyanobacteria the RNAP catalytic core is composed of 2 alpha, 1 beta, 1 beta', 1 gamma and 1 omega subunit. When a sigma factor is associated with the core the holoenzyme is formed, which can initiate transcription. The cofactor is Mg(2+). Requires Zn(2+) as cofactor.

It carries out the reaction RNA(n) + a ribonucleoside 5'-triphosphate = RNA(n+1) + diphosphate. In terms of biological role, DNA-dependent RNA polymerase catalyzes the transcription of DNA into RNA using the four ribonucleoside triphosphates as substrates. This Microcystis aeruginosa (strain NIES-843 / IAM M-2473) protein is DNA-directed RNA polymerase subunit gamma.